A 24-amino-acid chain; its full sequence is Grammistin Gs G (24 aa).

It belongs to the grammistin family. Group 1 subfamily. As to quaternary structure, exists as aggregates of 3-4 molecules. As to expression, expressed by the skin glands.

The protein localises to the secreted. In terms of biological role, thanks to its abundant amphiphilic alpha-helices, it may integrate into membrane phospholipids, leading to lysis of the membrane. Its high hemolytic activity is inhibited by phospholipids, but not by cholesterol. Has antibacterial activity with a broad spectrum against various species of bacteria including both Gram-positive and Gram-negative groups. Also has high ichthyotoxic activity. This Grammistes sexlineatus (Goldenstriped soapfish) protein is Grammistin Gs G.